Consider the following 567-residue polypeptide: MERTEESAPGPGGADAASERRGLRCLLLPGFLEELRALLVLAGPAFLAQLMMFLISFISSVFCGHLGKLELDAVTLAIAVINVTGISVGHGLSSACDTLISQTYGSQNLKHVGVILQRGTLILLLCCFPCWALFINTEQILLLFRQDPDVSRLTQTYVMIFIPALPAAFLYTLQVKYLLNQGIVLPQIMTGIAANLVNALANYVFLYHLHLGVMGSALANTISQFALAIFLFLYILWRRLHQATWGGWSWECLQDWASFLRLAIPSMLMLCIEWWAYEVGSFLSGILGMVELGAQSITYELAIIVYMIPSGFSVAANVRVGNALGAGNIDQAKKSSAISLIVTELFAVTFCVLLLGCKDLVGYIFTTDRDIVALVAQVIPIYAVSHLFEGLACTCGGILRGTGNQKVGAIVNAIGYYVIGLPIGIALMFAAKLGVIGLWSGIIICTTCQTTCFLAFIARLNWKRACQQAQVHANLKVNVALNSAVSHEPAHPVCPESHGEIMMTDLEKKDETQLDQPMNQQQALPIRPKDSNKLSGKQLALRRGLLLLGVVLVLVGGILVRVYIRIE.

M1 carries the post-translational modification N-acetylmethionine. Over 1–37 (MERTEESAPGPGGADAASERRGLRCLLLPGFLEELRA) the chain is Cytoplasmic. S18 bears the Phosphoserine mark. Residues 38–58 (LLVLAGPAFLAQLMMFLISFI) traverse the membrane as a helical segment. The Extracellular portion of the chain corresponds to 59-72 (SSVFCGHLGKLELD). Residues 73 to 93 (AVTLAIAVINVTGISVGHGLS) traverse the membrane as a helical segment. Over 94–120 (SACDTLISQTYGSQNLKHVGVILQRGT) the chain is Cytoplasmic. A helical membrane pass occupies residues 121-141 (LILLLCCFPCWALFINTEQIL). Over 142–152 (LLFRQDPDVSR) the chain is Extracellular. Residues 153-173 (LTQTYVMIFIPALPAAFLYTL) form a helical membrane-spanning segment. Topologically, residues 174–187 (QVKYLLNQGIVLPQ) are cytoplasmic. The chain crosses the membrane as a helical span at residues 188 to 208 (IMTGIAANLVNALANYVFLYH). Over 209 to 216 (LHLGVMGS) the chain is Extracellular. A helical transmembrane segment spans residues 217–237 (ALANTISQFALAIFLFLYILW). At 238–257 (RRLHQATWGGWSWECLQDWA) the chain is on the cytoplasmic side. The chain crosses the membrane as a helical span at residues 258–277 (SFLRLAIPSMLMLCIEWWAY). Topologically, residues 278–295 (EVGSFLSGILGMVELGAQ) are extracellular. Residues 296–316 (SITYELAIIVYMIPSGFSVAA) form a helical membrane-spanning segment. At 317-336 (NVRVGNALGAGNIDQAKKSS) the chain is on the cytoplasmic side. The helical transmembrane segment at 337–357 (AISLIVTELFAVTFCVLLLGC) threads the bilayer. The Extracellular portion of the chain corresponds to 358 to 370 (KDLVGYIFTTDRD). A helical membrane pass occupies residues 371–391 (IVALVAQVIPIYAVSHLFEGL). At 392–408 (ACTCGGILRGTGNQKVG) the chain is on the cytoplasmic side. Residues 409–429 (AIVNAIGYYVIGLPIGIALMF) form a helical membrane-spanning segment. The Extracellular segment spans residues 430 to 437 (AAKLGVIG). Residues 438 to 458 (LWSGIIICTTCQTTCFLAFIA) traverse the membrane as a helical segment. The Cytoplasmic segment spans residues 459 to 543 (RLNWKRACQQ…LSGKQLALRR (85 aa)). Residues 544–564 (GLLLLGVVLVLVGGILVRVYI) form a helical membrane-spanning segment. Topologically, residues 565 to 567 (RIE) are extracellular.

This sequence belongs to the multi antimicrobial extrusion (MATE) (TC 2.A.66.1) family. In terms of tissue distribution, predominantly expressed in kidney and liver. Also expressed in various cells, including brain glia-like cells and capillaries, pancreatic duct cells, urinary bladder epithelium, adrenal gland cortex, heart, stomach, small intestine, thyroid gland, testes, alpha cells of the islets of Langerhans, Leydig cells, and vitamin A-storing Ito cells. Expressed in heart, stomach, small intestine, bladder, thyroid gland, adrenal gland and testes (at protein level).

Its subcellular location is the cell membrane. It is found in the apical cell membrane. It carries out the reaction thiamine(out) + H(+)(in) = thiamine(in) + H(+)(out). The catalysed reaction is estrone 3-sulfate(in) + H(+)(out) = estrone 3-sulfate(out) + H(+)(in). It catalyses the reaction creatinine(in) + H(+)(out) = creatinine(out) + H(+)(in). The enzyme catalyses agmatine(in) + H(+)(out) = agmatine(out) + H(+)(in). In terms of biological role, multidrug efflux pump that functions as a H(+)/organic cation antiporter. Plays a physiological role in the excretion of cationic compounds including endogenous metabolites, drugs, toxins through the kidney and liver, into urine and bile respectively. Mediates the efflux of endogenous compounds such as creatinine, vitamin B1/thiamine, agmatine and estrone-3-sulfate. May also contribute to regulate the transport of cationic compounds in testis across the blood-testis-barrier. The sequence is that of Multidrug and toxin extrusion protein 1 (Slc47a1) from Mus musculus (Mouse).